We begin with the raw amino-acid sequence, 216 residues long: Guanylate kinase (216 aa).

A Guanylate kinase-like domain is found at 11–189 (GVLIVISGPS…AVKKIEAILL (179 aa)). 18-25 (GPSGAGKG) lines the ATP pocket.

It belongs to the guanylate kinase family.

Its subcellular location is the cytoplasm. The catalysed reaction is GMP + ATP = GDP + ADP. In terms of biological role, essential for recycling GMP and indirectly, cGMP. The sequence is that of Guanylate kinase from Clostridium perfringens (strain ATCC 13124 / DSM 756 / JCM 1290 / NCIMB 6125 / NCTC 8237 / Type A).